We begin with the raw amino-acid sequence, 946 residues long: Bifunctional glutamine synthetase adenylyltransferase/adenylyl-removing enzyme (946 aa).

The adenylyl removase stretch occupies residues 1-440; sequence MKPLSSPLQQ…VFNELIGDDE (440 aa). Residues 449–946 form an adenylyl transferase region; that stretch reads SEQWRELWQD…ASWQKWLVEE (498 aa).

It belongs to the GlnE family. The cofactor is Mg(2+).

It catalyses the reaction [glutamine synthetase]-O(4)-(5'-adenylyl)-L-tyrosine + phosphate = [glutamine synthetase]-L-tyrosine + ADP. The catalysed reaction is [glutamine synthetase]-L-tyrosine + ATP = [glutamine synthetase]-O(4)-(5'-adenylyl)-L-tyrosine + diphosphate. Its function is as follows. Involved in the regulation of glutamine synthetase GlnA, a key enzyme in the process to assimilate ammonia. When cellular nitrogen levels are high, the C-terminal adenylyl transferase (AT) inactivates GlnA by covalent transfer of an adenylyl group from ATP to specific tyrosine residue of GlnA, thus reducing its activity. Conversely, when nitrogen levels are low, the N-terminal adenylyl removase (AR) activates GlnA by removing the adenylyl group by phosphorolysis, increasing its activity. The regulatory region of GlnE binds the signal transduction protein PII (GlnB) which indicates the nitrogen status of the cell. The sequence is that of Bifunctional glutamine synthetase adenylyltransferase/adenylyl-removing enzyme from Escherichia coli O81 (strain ED1a).